Reading from the N-terminus, the 703-residue chain is Lethal(3)malignant brain tumor-like protein 2 (703 aa).

The interval 1-70 (MEKPRGTEET…AGELPTSPLH (70 aa)) is disordered. Position 13 is a phosphoserine (serine 13). Residues 15–25 (PMEEEEDDDLE) show a composition bias toward acidic residues. The span at 35-49 (SYNSSAGSESSSYLE) shows a compositional bias: low complexity. Acidic residues predominate over residues 50–60 (ESSEAENEDRE). Serine 67 bears the Phosphoserine mark. The FCS-type zinc finger occupies 81–116 (DGSGSEPAVCEMCGIVGTREAFFSKTKRFCSVSCSR). 4 residues coordinate Zn(2+): cysteine 90, cysteine 93, cysteine 110, and cysteine 114. MBT repeat units lie at residues 179–283 (FDWG…LVPP), 291–391 (TDWK…IKMS), 397–500 (MSHH…LTPP), and 508–604 (FDWE…LQPP). Phosphoserine is present on serine 338. Lysine 405 participates in a covalent cross-link: Glycyl lysine isopeptide (Lys-Gly) (interchain with G-Cter in SUMO2). Disordered stretches follow at residues 604 to 649 (PVSA…KKPL) and 672 to 703 (VKEE…ERDS). Residues 619-634 (TKKKKKQFGKKRKRIP) are compositionally biased toward basic residues. Glycyl lysine isopeptide (Lys-Gly) (interchain with G-Cter in SUMO2) cross-links involve residues lysine 647 and lysine 673. A phosphoserine mark is found at serine 681, serine 685, and serine 687. Lysine 698 participates in a covalent cross-link: Glycyl lysine isopeptide (Lys-Gly) (interchain with G-Cter in SUMO1); alternate. Residue lysine 698 forms a Glycyl lysine isopeptide (Lys-Gly) (interchain with G-Cter in SUMO2); alternate linkage.

Part of the E2F6.com-1 complex in G0 phase composed of E2F6, MGA, MAX, TFDP1, CBX3, BAT8, EUHMTASE1, RING1, RNF2, MBLR, BAT8 and YAF2.

The protein resides in the nucleus. Functionally, putative Polycomb group (PcG) protein. PcG proteins maintain the transcriptionally repressive state of genes, probably via a modification of chromatin, rendering it heritably changed in its expressibility. Its association with a chromatin-remodeling complex suggests that it may contribute to prevent expression of genes that trigger the cell into mitosis. Binds to monomethylated and dimethylated 'Lys-20' on histone H4. Binds histone H3 peptides that are monomethylated or dimethylated on 'Lys-4', 'Lys-9' or 'Lys-27'. The chain is Lethal(3)malignant brain tumor-like protein 2 (L3mbtl2) from Rattus norvegicus (Rat).